We begin with the raw amino-acid sequence, 250 residues long: Electron transfer flavoprotein subunit beta (250 aa).

Belongs to the ETF beta-subunit/FixA family. As to quaternary structure, heterodimer of an alpha and a beta subunit. It depends on FAD as a cofactor. AMP serves as cofactor.

It localises to the mitochondrion matrix. In terms of biological role, the electron transfer flavoprotein serves as a specific electron acceptor for several dehydrogenases, including five acyl-CoA dehydrogenases, glutaryl-CoA and sarcosine dehydrogenase. It transfers the electrons to the main mitochondrial respiratory chain via ETF-ubiquinone oxidoreductase (ETF dehydrogenase). This chain is Electron transfer flavoprotein subunit beta (etfb), found in Dictyostelium discoideum (Social amoeba).